Consider the following 835-residue polypeptide: BCL11 transcription factor A (835 aa).

Residues 1 to 12 (MSRRKQGKPQHL) are compositionally biased toward basic residues. Residues 1–41 (MSRRKQGKPQHLSKREFSPEPLEAILTDDEPDHGPLGAPEG) are disordered. The required for nuclear body formation and for SUMO1 recruitment stretch occupies residues 1-210 (MSRRKQGKPQ…SEHGSPLTPR (210 aa)). The segment at 45-71 (LLTCGQCQMNFPLGDILIFIEHKRKQC) adopts a C2HC-type zinc-finger fold. Zn(2+) is bound by residues C48, C51, H66, and C71. Phosphoserine is present on S86. Glycyl lysine isopeptide (Lys-Gly) (interchain with G-Cter in SUMO2) cross-links involve residues K123 and K164. A C2H2-type 1 zinc finger spans residues 170-193 (YTCTTCKQPFTSAWFLLQHAQNTH). Position 205 is a phosphoserine (S205). R271 carries the asymmetric dimethylarginine modification. The disordered stretch occupies residues 323 to 376 (AGNTSSPPLSPGRPSPMQRLLQPFQPGSKPPFLATPPLPPLQSAPPPSQPPVKS). Phosphoserine occurs at positions 332 and 337. Residues 355–372 (LATPPLPPLQSAPPPSQP) show a composition bias toward pro residues. 2 C2H2-type zinc fingers span residues 377 to 399 (KSCE…RRSH) and 405 to 429 (YKCN…THMH). A compositionally biased stretch (basic residues) spans 421–430 (KRHMKTHMHK). Disordered stretches follow at residues 421 to 458 (KRHM…LVGS), 471 to 512 (KSEN…ERVD), and 572 to 619 (RGHL…GLSK). The segment covering 441–450 (GLSTASSPEP) has biased composition (polar residues). Residues S446 and S447 each carry the phosphoserine modification. Acidic residues predominate over residues 482-506 (NGDEEEEEDDEEEEEEEEEEEEELT). Residues 574-584 (HLAEAEGHRDT) are compositionally biased toward basic and acidic residues. S608 carries the post-translational modification Phosphoserine. K620 is covalently cross-linked (Glycyl lysine isopeptide (Lys-Gly) (interchain with G-Cter in SUMO2)). Phosphoserine occurs at positions 625 and 630. Residue K634 forms a Glycyl lysine isopeptide (Lys-Gly) (interchain with G-Cter in SUMO1) linkage. Residues 678–740 (DSRQSPFASS…GRPSSKEGRR (63 aa)) form a disordered region. Residues 682–696 (SPFASSSEHSSENGS) are compositionally biased toward low complexity. T701 is modified (phosphothreonine). The segment covering 706–720 (LDGGISGRSGTGSGG) has biased composition (gly residues). Positions 737-835 (EGRRSDTCEY…RVLNNDIKTE (99 aa)) are DNA-binding. Residues 742–764 (DTCEYCGKVFKNCSNLTVHRRSH) form a C2H2-type 4 zinc finger. C744, C747, H760, and H764 together coordinate Zn(2+). Residues 765–769 (TGERP) form a disordered region. Residues 770 to 792 (YKCELCNYACAQSSKLTRHMKTH) form a C2H2-type 5 zinc finger. Residues C772, C775, H788, and H792 each coordinate Zn(2+). The segment at 793–799 (GQVGKDV) is disordered. The C2H2-type 6 zinc-finger motif lies at 800–823 (YKCEICKMPFSVYSTLEKHMKKWH). 4 residues coordinate Zn(2+): C802, C805, H818, and H823. Residue K833 forms a Glycyl lysine isopeptide (Lys-Gly) (interchain with G-Cter in SUMO2) linkage.

As to quaternary structure, homotetrameric; self-associates via C2HC-type zinc finger domain. Interacts with MTA2, a component of the nucleosome remodeling and deacetylase (NuRD) repressor complex. Interacts (via its C2H2-type zinc finger domains 4, 5 and 6) with promoter region of gamma-globulin. Interacts with NR2F1, PIAS3, NR2F2 and NR2F6. Isoform 1, isoform 2 and isoform 3 form homodimers and heterodimers. Isoform 2 interacts with TBR1. Post-translationally, sumoylated with SUMO1. In terms of tissue distribution, expressed at high levels in brain, spleen thymus, bone marrow and testis. Expressed in CD34-positive myeloid precursor cells, B-cells, monocytes and megakaryocytes. Expression is tightly regulated during B-cell development. As to expression, expressed in fetal and adult brain, and in the plasmacytoid dendritic cell.

Its subcellular location is the cytoplasm. It is found in the nucleus. The protein localises to the chromosome. It localises to the nucleus matrix. Functionally, transcription factor. Associated with the BAF SWI/SNF chromatin remodeling complex. Binds to the 5'-TGACCA-3' sequence motif in regulatory regions of target genes, including a distal promoter of the HBG1 hemoglobin subunit gamma-1 gene. Involved in regulation of the developmental switch from gamma- to beta-globin, probably via direct repression of HBG1; hence indirectly repressing fetal hemoglobin (HbF) level. Involved in brain development. May play a role in hematopoiesis. Essential factor in lymphopoiesis required for B-cell formation in fetal liver. May function as a modulator of the transcriptional repression activity of NR2F2. The chain is BCL11 transcription factor A (BCL11A) from Homo sapiens (Human).